Reading from the N-terminus, the 156-residue chain is ATP synthase subunit b 1 (156 aa).

The chain crosses the membrane as a helical span at residues 7–27 (LFLQAIVFAILVWFTMKFVWP).

The protein belongs to the ATPase B chain family. F-type ATPases have 2 components, F(1) - the catalytic core - and F(0) - the membrane proton channel. F(1) has five subunits: alpha(3), beta(3), gamma(1), delta(1), epsilon(1). F(0) has three main subunits: a(1), b(2) and c(10-14). The alpha and beta chains form an alternating ring which encloses part of the gamma chain. F(1) is attached to F(0) by a central stalk formed by the gamma and epsilon chains, while a peripheral stalk is formed by the delta and b chains.

It localises to the cell inner membrane. F(1)F(0) ATP synthase produces ATP from ADP in the presence of a proton or sodium gradient. F-type ATPases consist of two structural domains, F(1) containing the extramembraneous catalytic core and F(0) containing the membrane proton channel, linked together by a central stalk and a peripheral stalk. During catalysis, ATP synthesis in the catalytic domain of F(1) is coupled via a rotary mechanism of the central stalk subunits to proton translocation. Functionally, component of the F(0) channel, it forms part of the peripheral stalk, linking F(1) to F(0). This chain is ATP synthase subunit b 1, found in Albidiferax ferrireducens (strain ATCC BAA-621 / DSM 15236 / T118) (Rhodoferax ferrireducens).